A 113-amino-acid polypeptide reads, in one-letter code: Nucleoid-associated protein P9303_00241 (113 aa).

The tract at residues 90-113 (TTTMKEQMEELTGGLNLNLPGMSD) is disordered.

This sequence belongs to the YbaB/EbfC family. As to quaternary structure, homodimer.

The protein localises to the cytoplasm. Its subcellular location is the nucleoid. Functionally, binds to DNA and alters its conformation. May be involved in regulation of gene expression, nucleoid organization and DNA protection. The polypeptide is Nucleoid-associated protein P9303_00241 (Prochlorococcus marinus (strain MIT 9303)).